Reading from the N-terminus, the 98-residue chain is Large ribosomal subunit protein eL21 (98 aa).

Residues 1–24 are disordered; that stretch reads MVKMSHGPRSGSRRKLTKSAEERK.

This sequence belongs to the eukaryotic ribosomal protein eL21 family.

This is Large ribosomal subunit protein eL21 (rpl21e) from Thermoplasma acidophilum (strain ATCC 25905 / DSM 1728 / JCM 9062 / NBRC 15155 / AMRC-C165).